A 228-amino-acid chain; its full sequence is MKDFKKKIIMKISRIEYKHTAFSAEYKDVEKVYKKLRDNMDKVATGINNLMTYEHGGSAMKKIYHGLSMVSSASRMNYFSDADIFEGFARINKDLTDSDLDEGVREVGRKTAEAYENISKAKEKFNEQCGREMEVLMSMKKRAETTDKERENAKIYRYDLEKAKQSNNPEDQEEVDRLSELFENSQTRTIEMMRDFIGADGLQGVLTRVRDLNIEFHQESVKALERTK.

N-linked (GlcNAc...) asparagine glycosylation is present at N117.

Belongs to the SWP12 family.

The protein localises to the spore wall. The chain is Spore wall protein 12 (SWP12) from Nosema bombycis (strain CQ1 / CVCC 102059) (Microsporidian parasite).